We begin with the raw amino-acid sequence, 391 residues long: Elongation factor Tu (391 aa).

Residues 10-201 (KPHVNIGTIG…AVDEYIPTPA (192 aa)) form the tr-type G domain. The interval 19–26 (GHVDHGKT) is G1. Residue 19-26 (GHVDHGKT) participates in GTP binding. Position 26 (T26) interacts with Mg(2+). The tract at residues 55 to 59 (GITIS) is G2. The segment at 76-79 (DCPG) is G3. Residues 76 to 80 (DCPGH) and 131 to 134 (NKVD) contribute to the GTP site. The G4 stretch occupies residues 131-134 (NKVD). The tract at residues 169–171 (SAL) is G5.

Belongs to the TRAFAC class translation factor GTPase superfamily. Classic translation factor GTPase family. EF-Tu/EF-1A subfamily. In terms of assembly, monomer.

Its subcellular location is the cytoplasm. It carries out the reaction GTP + H2O = GDP + phosphate + H(+). Its function is as follows. GTP hydrolase that promotes the GTP-dependent binding of aminoacyl-tRNA to the A-site of ribosomes during protein biosynthesis. This Cereibacter sphaeroides (strain ATCC 17025 / ATH 2.4.3) (Rhodobacter sphaeroides) protein is Elongation factor Tu.